Reading from the N-terminus, the 624-residue chain is Galactan 5-O-arabinofuranosyltransferase (624 aa).

A run of 13 helical transmembrane segments spans residues 5–25 (VLGQ…VAIA), 43–63 (ALTT…GLLW), 73–93 (LGAL…PLGA), 127–147 (IGLP…IAAA), 159–179 (WSIV…AAMI), 181–201 (FEYA…YAST), 203–223 (PYAA…WAGL), 234–254 (AIVG…LLLV), 280–300 (LAVI…PYLL), 326–346 (FPMF…VWLV), 355–375 (AGAL…SMLT), 391–411 (LTVL…LAIA), and 422–442 (VVAA…QDIP).

Belongs to the glycosyltransferase 85 family.

The protein resides in the cell membrane. The enzyme catalyses Adds an alpha-D-arabinofuranosyl group from trans,octacis-decaprenylphospho-beta-D-arabinofuranose at the 5-O-position of the eighth, tenth and twelfth galactofuranose unit of the galactofuranan chain of [beta-D-galactofuranosyl-(1-&gt;5)-beta-D-galactofuranosyl-(1-&gt;6)]14-beta-D-galactofuranosyl-(1-&gt;5)-beta-D-galactofuranosyl-(1-&gt;4)-alpha-L-rhamnopyranosyl-(1-&gt;3)-N-acetyl-alpha-D-glucosaminyl-diphospho-trans,octacis-decaprenol.. The protein operates within cell wall biogenesis; cell wall polysaccharide biosynthesis. Its function is as follows. Involved in the biosynthesis of the arabinogalactan (AG) region of the mycolylarabinogalactan-peptidoglycan (mAGP) complex, an essential component of the mycobacterial cell wall. Catalyzes the addition of the first key arabinofuranosyl (Araf) residue from the sugar donor decaprenyl-phospho-arabinose (DPA) on the C-5 of a 6-linked galactofuranosyl (Galf) of the galactan domain, thus 'priming' the galactan for further elaboration by other arabinofuranosyltransferases. It is not able to add an Araf residue to a terminal Galf. In Mycolicibacterium smegmatis (strain ATCC 700084 / mc(2)155) (Mycobacterium smegmatis), this protein is Galactan 5-O-arabinofuranosyltransferase.